Consider the following 723-residue polypeptide: Delta-like protein 1 (723 aa).

The first 17 residues, 1–17 (MGSRCALALAVLSALLC), serve as a signal peptide directing secretion. The Extracellular portion of the chain corresponds to 18-545 (QVWSSGVFEL…LEGQGGPFPW (528 aa)). The region spanning 177–221 (FVCDEHYYGEGCSVFCRPRDDAFGHFTCGERGEKVCNPGWKGPYC) is the DSL domain. 27 disulfide bridges follow: C179-C188, C192-C204, C212-C221, C226-C237, C230-C243, C245-C254, C257-C268, C263-C274, C276-C285, C292-C304, C298-C314, C316-C325, C332-C343, C337-C352, C354-C363, C370-C381, C375-C391, C393-C402, C409-C420, C414-C429, C431-C440, C447-C458, C452-C467, C469-C478, C485-C496, C490-C505, and C507-C516. 3 EGF-like domains span residues 226-254 (CLPG…GRYC), 257-285 (CIRY…GLFC), and 292-325 (CTHH…GATC). Residues 332-363 (CDPSPCKNGGSCTDLENSYSCTCPPGFYGKIC) form the EGF-like 4; calcium-binding domain. 2 EGF-like domains span residues 370 to 402 (CADG…GFNC) and 409 to 440 (CSSS…GRHC). One can recognise an EGF-like 7; calcium-binding domain in the interval 447-478 (CASSPCANGGTCRDGVNDFSCTCPPGYTGRNC). An N-linked (GlcNAc...) asparagine glycan is attached at N477. Residues 485-516 (CEHAPCHNGATCHERGHRYVCECARGYGGPNC) form the EGF-like 8 domain. Residues 546 to 568 (VAVCAGVILVLMLLLGCAAVVVC) traverse the membrane as a helical segment. Topologically, residues 569–723 (VRLRLQKHRP…KDECVIATEV (155 aa)) are cytoplasmic. K613 is covalently cross-linked (Glycyl lysine isopeptide (Lys-Gly) (interchain with G-Cter in ubiquitin)). The span at 653–664 (AVRDAHSKRDTK) shows a compositional bias: basic and acidic residues. The segment at 653–702 (AVRDAHSKRDTKCQPQGSSGEEKGTPTTLRGGEASERKRPDSGCSTSKDT) is disordered. S694 is subject to Phosphoserine; by PKB. Phosphoserine is present on S697. The interaction with MAGI1 stretch occupies residues 720 to 723 (ATEV).

As to quaternary structure, homodimer. Interacts with TJP1. Interacts with MAGI1 (via PDZ domain); forms a complex with CTNNB1 and CDH2 and promotes recruitment to the adherens junction and stabilization on the cell surface. Interacts with PSEN1; undergoes a presenilin-dependent gamma-secretase cleavage that releases a Dll1-intracellular form. Interacts with MFAP5. Interacts with MIB1. Interacts with NEURL1B; leads to ubiquitination. Interacts with NEURL1. Interacts with SYNJ2BP; enhances DLL1 protein stability, and promotes Notch signaling in endothelial cells. Interacts with MAGI1, MAGI2, MAGI3 and MPDZ. Interacts (via ubiquitin) with EPN1 (via IUM domain); binding with NOTCH1 attached to neighboring cell, promotes ligand ubiquitination and EPN1 interaction, leading to NECD transendocytosis and Notch signaling. Interacts with NOTCH1. Interacts with NOTCH2NLB; leading to promote Notch signaling pathway in a cell-autonomous manner through inhibition of cis DLL1-NOTCH2 interactions. Ubiquitinated by MIB (MIB1 or MIB2), leading to its endocytosis and subsequent degradation. Ubiquitinated; promotes recycling back to the plasma membrane and confers a strong affinity for NOTCH1. Multi-ubiquitination of Lys-613 by MIB1 promotes both cis and trans-interaction with NOTCH1, as well as activation of Notch signaling. Ubiquitinated by NEURL1B. Post-translationally, phosphorylated in a membrane association-dependent manner. Phosphorylation at Ser-697 requires the presence of Ser-694, whereas phosphorylation at Ser-694 occurs independently of the other site. Phosphorylation is required for full ligand activity in vitro and affects surface presentation, ectodomain shedding, and endocytosis. In terms of processing, O-fucosylated. Can be elongated to a disaccharide by MFNG. In terms of tissue distribution, expressed in heart and pancreas, with lower expression in brain and muscle and almost no expression in placenta, lung, liver and kidney.

The protein localises to the apical cell membrane. It localises to the cell junction. It is found in the adherens junction. Its subcellular location is the membrane raft. Functionally, transmembrane ligand protein of NOTCH1, NOTCH2 and NOTCH3 receptors that binds the extracellular domain (ECD) of Notch receptor in a cis and trans fashion manner. Following transinteraction, ligand cells produce mechanical force that depends of a clathrin-mediated endocytosis, requiring ligand ubiquitination, EPN1 interaction, and actin polymerisation; these events promote Notch receptor extracellular domain (NECD) transendocytosis and triggers Notch signaling through induction of cleavage, hyperphosphorylation, and nuclear accumulation of the intracellular domain of Notch receptors (NICD). Is required for embryonic development and maintenance of adult stem cells in many different tissues and immune systeme; the DLL1-induced Notch signaling is mediated through an intercellular communication that regulates cell lineage, cell specification, cell patterning and morphogenesis through effects on differentiation and proliferation. Plays a role in brain development at different level, namely by regulating neuronal differentiation of neural precursor cells via cell-cell interaction, most likely through the lateral inhibitory system in an endogenous level dependent-manner. During neocortex development, Dll1-Notch signaling transmission is mediated by dynamic interactions between intermediate neurogenic progenitors and radial glia; the cell-cell interactions are mediated via dynamic and transient elongation processes, likely to reactivate/maintain Notch activity in neighboring progenitors, and coordinate progenitor cell division and differentiation across radial and zonal boundaries. During cerebellar development, regulates Bergmann glial monolayer formation and its morphological maturation through a Notch signaling pathway. At the retina and spinal cord level, regulates neurogenesis by preventing the premature differentiation of neural progenitors and also by maintaining progenitors in spinal cord through Notch signaling pathway. Also controls neurogenesis of the neural tube in a progenitor domain-specific fashion along the dorsoventral axis. Maintains quiescence of neural stem cells and plays a role as a fate determinant that segregates asymmetrically to one daughter cell during neural stem cells mitosis, resulting in neuronal differentiation in Dll1-inheriting cell. Plays a role in immune systeme development, namely the development of all T-cells and marginal zone (MZ) B-cells. Blocks the differentiation of progenitor cells into the B-cell lineage while promoting the emergence of a population of cells with the characteristics of a T-cell/NK-cell precursor. Also plays a role during muscle development. During early development, inhibits myoblasts differentiation from the medial dermomyotomal lip and later regulates progenitor cell differentiation. Directly modulates cell adhesion and basal lamina formation in satellite cells through Notch signaling. Maintains myogenic progenitors pool by suppressing differentiation through down-regulation of MYOD1 and is required for satellite cell homing and PAX7 expression. During craniofacial and trunk myogenesis suppresses differentiation of cranial mesoderm-derived and somite-derived muscle via MYOD1 regulation but in cranial mesoderm-derived progenitors, is neither required for satellite cell homing nor for PAX7 expression. Also plays a role during pancreatic cell development. During type B pancreatic cell development, may be involved in the initiation of proximodistal patterning in the early pancreatic epithelium. Stimulates multipotent pancreatic progenitor cells proliferation and pancreatic growth by maintaining HES1 expression and PTF1A protein levels. During fetal stages of development, is required to maintain arterial identity and the responsiveness of arterial endothelial cells for VEGFA through regulation of KDR activation and NRP1 expression. Controls sprouting angiogenesis and subsequent vertical branch formation through regulation on tip cell differentiation. Negatively regulates goblet cell differentiation in intestine and controls secretory fat commitment through lateral inhibition in small intestine. Plays a role during inner ear development; negatively regulates auditory hair cell differentiation. Plays a role during nephron development through Notch signaling pathway. Regulates growth, blood pressure and energy homeostasis. This Homo sapiens (Human) protein is Delta-like protein 1.